Here is an 858-residue protein sequence, read N- to C-terminus: Leucine--tRNA ligase (858 aa).

Positions 42 to 52 (PYPSGRLHMGH) match the 'HIGH' region motif. The 'KMSKS' region signature appears at 618-622 (KMSKS). Residue Lys621 participates in ATP binding.

Belongs to the class-I aminoacyl-tRNA synthetase family.

The protein localises to the cytoplasm. It carries out the reaction tRNA(Leu) + L-leucine + ATP = L-leucyl-tRNA(Leu) + AMP + diphosphate. This chain is Leucine--tRNA ligase, found in Aliivibrio fischeri (strain ATCC 700601 / ES114) (Vibrio fischeri).